Here is a 464-residue protein sequence, read N- to C-terminus: Light-independent protochlorophyllide reductase subunit N (464 aa).

Residues Cys-29, Cys-54, and Cys-114 each coordinate [4Fe-4S] cluster.

The protein belongs to the BchN/ChlN family. As to quaternary structure, protochlorophyllide reductase is composed of three subunits; ChlL, ChlN and ChlB. Forms a heterotetramer of two ChlB and two ChlN subunits. It depends on [4Fe-4S] cluster as a cofactor.

The protein resides in the plastid. Its subcellular location is the chloroplast. It catalyses the reaction chlorophyllide a + oxidized 2[4Fe-4S]-[ferredoxin] + 2 ADP + 2 phosphate = protochlorophyllide a + reduced 2[4Fe-4S]-[ferredoxin] + 2 ATP + 2 H2O. Its pathway is porphyrin-containing compound metabolism; chlorophyll biosynthesis (light-independent). Functionally, component of the dark-operative protochlorophyllide reductase (DPOR) that uses Mg-ATP and reduced ferredoxin to reduce ring D of protochlorophyllide (Pchlide) to form chlorophyllide a (Chlide). This reaction is light-independent. The NB-protein (ChlN-ChlB) is the catalytic component of the complex. This chain is Light-independent protochlorophyllide reductase subunit N, found in Stigeoclonium helveticum (Green alga).